Reading from the N-terminus, the 887-residue chain is MVTLWWPCLVLALLSGLETSGFPRSPLRLLGKRSLPEGVVDGIEIYSTKISCKVTSRFAHNVVTTRAVNRADKAKEVSFDVELPKTAFITNFTLTIDGVTYPGSVKEKEVAQKQYEKAVSQGKTAGLVKASGRKLEKFTVSVNVAAGSKVIFELTYEELLKRNKGKYEMYLKVQPKQLVRHFEIDAHIFEPQGISMLDADASFITNDLLGSALTKSFSGKKGHVSFKPSLDQQRSCPTCTDSLLNGDFTIVYDVNRESPGNVQIVNGYFVHFFAPQGLPVVPKNIAFVIDVSGSMSGRKIQQTREALLKILDDMKEEDYLNFILFSTGVTTWKDHLVKATPANLEEARAFVKNIRDRSMTNINDGLLRGIEMLNKAREDHLVPERSTSILVMLTDGDANTGESRPEKIQENVRNAIRGKFPLYNLGFGNNLNYNFLESLALENHGFARRIYEDSDASLQLQGFYEEVANPLLTNVELEYPENAILDLTRNSYPHFYDGSEIVVAGRLVDRNVDNFKADVKGHGALNDLTFTEEVDMKEMDAALKEQGYIFGDYIERLWAYLTIEQLLEKRKNARGDEKENITAEALELSLKYHFVTPLTSMVVTKPEDNEDQTAIADKPGEEAISASTAYLTSQQSSHSPYYYVDGDPHFIIQVPGKNDTICFNIDEKPGTVLSLIQDPVTGIAVTGQIIGEKGNNASSRTGKTYFGKLGIANAWMDFRIEVTTEKIILGNGDALSTFSWLDTVTVTQTGLSVTINRKKNMVVSFEDGISFVIVLHQVWKKHPVHQDFLGFYVVDSHRMSAQTHGLLGQFFQPFDFKVFDVRPGSDPMKPDATMVVKSHRLTVTRGSQKDYRKDASVGTKVVCWFVHNNGEGFIDGVHTDYIVPSLF.

Positions methionine 1–glycine 21 are cleaved as a signal peptide. Positions phenylalanine 22–arginine 33 are excised as a propeptide. A VIT domain is found at leucine 29–glutamate 158. An N-linked (GlcNAc...) asparagine glycan is attached at asparagine 91. A VWFA domain is found at proline 282–glutamate 442. The N-linked (GlcNAc...) asparagine glycan is linked to asparagine 580. Aspartate 647 bears the Aspartate 1-(chondroitin 4-sulfate)-ester mark. A propeptide spanning residues proline 648 to phenylalanine 887 is cleaved from the precursor.

Belongs to the ITIH family. I-alpha-I plasma protease inhibitors are assembled from one or two heavy chains (HC) and one light chain, bikunin. Pre-alpha-inhibitor (P-alpha-I) is composed of ITIH3/HC3 and bikunin. Heavy chains are linked to bikunin via chondroitin 4-sulfate esterified to the alpha-carboxyl of the C-terminal aspartate after propeptide cleavage.

It localises to the secreted. Functionally, may act as a carrier of hyaluronan in serum or as a binding protein between hyaluronan and other matrix protein, including those on cell surfaces in tissues to regulate the localization, synthesis and degradation of hyaluronan which are essential to cells undergoing biological processes. The chain is Inter-alpha-trypsin inhibitor heavy chain H3 (Itih3) from Rattus norvegicus (Rat).